The primary structure comprises 229 residues: 5'-methylthioadenosine/S-adenosylhomocysteine nucleosidase (229 aa).

Residue E12 is the Proton acceptor of the active site. Residues G78, I152, and 173–174 contribute to the substrate site; that span reads ME. Catalysis depends on D197, which acts as the Proton donor.

This sequence belongs to the PNP/UDP phosphorylase family. MtnN subfamily.

The enzyme catalyses S-adenosyl-L-homocysteine + H2O = S-(5-deoxy-D-ribos-5-yl)-L-homocysteine + adenine. It carries out the reaction S-methyl-5'-thioadenosine + H2O = 5-(methylsulfanyl)-D-ribose + adenine. It catalyses the reaction 5'-deoxyadenosine + H2O = 5-deoxy-D-ribose + adenine. The protein operates within amino-acid biosynthesis; L-methionine biosynthesis via salvage pathway; S-methyl-5-thio-alpha-D-ribose 1-phosphate from S-methyl-5'-thioadenosine (hydrolase route): step 1/2. In terms of biological role, catalyzes the irreversible cleavage of the glycosidic bond in both 5'-methylthioadenosine (MTA) and S-adenosylhomocysteine (SAH/AdoHcy) to adenine and the corresponding thioribose, 5'-methylthioribose and S-ribosylhomocysteine, respectively. Also cleaves 5'-deoxyadenosine, a toxic by-product of radical S-adenosylmethionine (SAM) enzymes, into 5-deoxyribose and adenine. This Mannheimia succiniciproducens (strain KCTC 0769BP / MBEL55E) protein is 5'-methylthioadenosine/S-adenosylhomocysteine nucleosidase.